The primary structure comprises 178 residues: Large ribosomal subunit protein uL6 (178 aa).

Belongs to the universal ribosomal protein uL6 family. In terms of assembly, part of the 50S ribosomal subunit.

This protein binds to the 23S rRNA, and is important in its secondary structure. It is located near the subunit interface in the base of the L7/L12 stalk, and near the tRNA binding site of the peptidyltransferase center. The polypeptide is Large ribosomal subunit protein uL6 (Streptococcus agalactiae serotype Ia (strain ATCC 27591 / A909 / CDC SS700)).